The chain runs to 322 residues: MAGFMRQLFVCMIGIYGSFLSWAVMQEKIITRPYDGERFSSPALLSLAQSFMTVLCGLLWNWFHGVSARGLLEPKFLGYFSSIAISASLSSYFGYASMFHLSYPTVILGKSCKLLPVIALHVFVYKRKFPPHKYLIVTMITAGVSIFSYFQNTSSKGKHAEHDSPIGLLLLFFNLLMDGITNTTQDKVFGKYKLSSVTMMIAVNLGIACLNGLYLISPFCNQQPLSFINRHPSILKDMLLFACTGSVGQLFIFFTLEKFGSITLVTITLTRKIFTMLLSVFHFHHTVSSIQWLGILLVFLGISLEAGLKILNNNSTAKKKAS.

5 helical membrane passes run 4-24 (FMRQ…SWAV), 43-63 (ALLS…WNWF), 76-96 (FLGY…FGYA), 105-125 (TVIL…VFVY), and 129-149 (FPPH…IFSY). An N-linked (GlcNAc...) asparagine glycan is attached at Asn-152. Helical transmembrane passes span 164 to 184 (SPIG…TNTT), 199 to 219 (MMIA…ISPF), 250 to 270 (LFIF…ITLT), and 290 to 310 (IQWL…GLKI). Residues Asn-313 and Asn-314 are each glycosylated (N-linked (GlcNAc...) asparagine).

It belongs to the nucleotide-sugar transporter family. SLC35B subfamily.

The protein resides in the endoplasmic reticulum membrane. Functionally, may be involved in specific transport of UDP-Gal from the cytosol to the Golgi lumen. Involved in the maintenance of optimal conditions for the folding of secretory pathway proteins in the endoplasmic reticulum. The polypeptide is UDP-galactose transporter homolog 1 (hut1) (Schizosaccharomyces pombe (strain 972 / ATCC 24843) (Fission yeast)).